The chain runs to 1886 residues: Nuclear pore membrane glycoprotein 210 (1886 aa).

The first 26 residues, 1 to 26 (MARASLVQPALWALLLLQVVGPAAAA), serve as a signal peptide directing secretion. Topologically, residues 27-1808 (KLNIPKVLLP…LLSHFLDSYQ (1782 aa)) are perinuclear space. N-linked (GlcNAc...) asparagine glycans are attached at residues asparagine 44, asparagine 337, asparagine 405, asparagine 484, asparagine 681, asparagine 801, asparagine 926, asparagine 1039, asparagine 1116, asparagine 1135, asparagine 1362, and asparagine 1441. Residues 1078 to 1151 (FPPFRLIPRK…VQAVDAETGK (74 aa)) enclose the BIG2 domain. A helical membrane pass occupies residues 1809 to 1829 (VMFFTFFALLAGTAVTIIAYH). Residues 1830–1886 (TVCAPRELASPLALTPRASPQHSPHYLASSPAAFNTLPSGRKASPPSGLWSPAYASH) lie on the Cytoplasmic side of the membrane. Serine 1839 carries the phosphoserine modification. A Phosphothreonine modification is found at threonine 1844. 4 positions are modified to phosphoserine: serine 1873, serine 1876, serine 1880, and serine 1885.

This sequence belongs to the NUP210 family. Forms dimers and possibly higher-order oligomers. N-glycosylated, but not all potential glycosylation sites may be used. Contains high-mannose type oligosaccharides. Post-translationally, phosphorylated at Ser-1880 in mitosis specifically; not phosphorylated in interphase.

The protein resides in the nucleus. It is found in the nuclear pore complex. It localises to the nucleus membrane. The protein localises to the endoplasmic reticulum membrane. Its function is as follows. Nucleoporin essential for nuclear pore assembly and fusion, nuclear pore spacing, as well as structural integrity. The sequence is that of Nuclear pore membrane glycoprotein 210 (Nup210) from Mus musculus (Mouse).